The following is a 460-amino-acid chain: Ribosomal protein uS12 methylthiotransferase RimO (460 aa).

The 111-residue stretch at 9–119 folds into the MTTase N-terminal domain; the sequence is PKVGFVSLGC…VMEAVHAALP (111 aa). Positions 18, 54, 83, 150, 154, and 157 each coordinate [4Fe-4S] cluster. In terms of domain architecture, Radical SAM core spans 136–374; sequence LTPRHYAYLK…AKQAEISALR (239 aa). Positions 376–444 constitute a TRAM domain; the sequence is EAKIGSVQQC…EHDLFGDALP (69 aa).

This sequence belongs to the methylthiotransferase family. RimO subfamily. [4Fe-4S] cluster serves as cofactor.

The protein localises to the cytoplasm. The enzyme catalyses L-aspartate(89)-[ribosomal protein uS12]-hydrogen + (sulfur carrier)-SH + AH2 + 2 S-adenosyl-L-methionine = 3-methylsulfanyl-L-aspartate(89)-[ribosomal protein uS12]-hydrogen + (sulfur carrier)-H + 5'-deoxyadenosine + L-methionine + A + S-adenosyl-L-homocysteine + 2 H(+). Its function is as follows. Catalyzes the methylthiolation of an aspartic acid residue of ribosomal protein uS12. The protein is Ribosomal protein uS12 methylthiotransferase RimO of Xanthomonas oryzae pv. oryzae (strain PXO99A).